The chain runs to 142 residues: MVIETWKKSGIATKFPTYRNSAPVTVHSWQKGKRQDVEAEGLWRIKDGIYDFTEFIDKHPGGTFWIRETKGTDITEAFEAHHLTTAPEKMIAKYKVRDAYQRIYTLTLHEDGFYKTLKERVREKLKTIDKRPKRKSDVSDDL.

The Cytochrome b5 heme-binding domain maps to 16–100 (PTYRNSAPVT…IAKYKVRDAY (85 aa)). 2 residues coordinate heme: His-59 and His-82.

This sequence belongs to the cytochrome b5 family.

Functionally, may play a role in muscle cell metabolism. This is Cytochrome b5-related protein (Cyt-b5-r) from Drosophila virilis (Fruit fly).